The primary structure comprises 736 residues: Subtilisin-like protease SBT4.12 (736 aa).

The signal sequence occupies residues 1-24 (MANLAASTCLYSWLLVLLLSSVSA). A propeptide spans 25 to 110 (IIDEDTQVYI…VFPNKILQLH (86 aa)) (activation peptide). The Inhibitor I9 domain occupies 32–110 (VYIVYMGSLS…VFPNKILQLH (79 aa)). The Peptidase S8 domain maps to 114–580 (SWDFMGVKEG…AGHVDPMAAL (467 aa)). Asp-142 (charge relay system) is an active-site residue. N-linked (GlcNAc...) asparagine glycosylation is present at Asn-173. The active-site Charge relay system is the His-197. Residues Asn-220, Asn-381, and Asn-459 are each glycosylated (N-linked (GlcNAc...) asparagine). Positions 353-437 (KYPLVYGKSA…GLKAKDFKSL (85 aa)) constitute a PA domain. Residue Ser-519 is the Charge relay system of the active site. Asn-601, Asn-649, and Asn-659 each carry an N-linked (GlcNAc...) asparagine glycan.

This sequence belongs to the peptidase S8 family. The C-terminal propeptide is autocleaved. As to expression, specifically expressed in root stele of the root hair zone.

Its subcellular location is the secreted. This is Subtilisin-like protease SBT4.12 from Arabidopsis thaliana (Mouse-ear cress).